The chain runs to 466 residues: Asparagine--tRNA ligase (466 aa).

This sequence belongs to the class-II aminoacyl-tRNA synthetase family. As to quaternary structure, homodimer.

It localises to the cytoplasm. The enzyme catalyses tRNA(Asn) + L-asparagine + ATP = L-asparaginyl-tRNA(Asn) + AMP + diphosphate + H(+). The sequence is that of Asparagine--tRNA ligase from Klebsiella pneumoniae subsp. pneumoniae (strain ATCC 700721 / MGH 78578).